We begin with the raw amino-acid sequence, 76 residues long: Large ribosomal subunit protein bL31 (76 aa).

Belongs to the bacterial ribosomal protein bL31 family. Type A subfamily. In terms of assembly, part of the 50S ribosomal subunit.

Its function is as follows. Binds the 23S rRNA. The polypeptide is Large ribosomal subunit protein bL31 (Picosynechococcus sp. (strain ATCC 27264 / PCC 7002 / PR-6) (Agmenellum quadruplicatum)).